We begin with the raw amino-acid sequence, 397 residues long: ATP-dependent RNA helicase eIF4A (397 aa).

The short motif at 24-52 (DSFDEMNLKPELLRGIYAYGFERPSAIQQ) is the Q motif element. The Helicase ATP-binding domain maps to 55–225 (IMPVIKGHDV…TKFMREPVRI (171 aa)). ATP is bound at residue 68–75 (AQSGTGKT). The DEAD box signature appears at 173–176 (DEAD). The Helicase C-terminal domain occupies 236 to 397 (GIKQFYIAVE…EMPMNVADLI (162 aa)).

It belongs to the DEAD box helicase family. eIF4A subfamily. In terms of assembly, component of the eIF4F complex, which composition varies with external and internal environmental conditions. It is composed of at least eIF4A, eIF4E and eIF4G.

The protein resides in the cytoplasm. The enzyme catalyses ATP + H2O = ADP + phosphate + H(+). Its function is as follows. ATP-dependent RNA helicase which is a subunit of the eIF4F complex involved in cap recognition and is required for mRNA binding to ribosome. In the current model of translation initiation, eIF4A unwinds RNA secondary structures in the 5'-UTR of mRNAs which is necessary to allow efficient binding of the small ribosomal subunit, and subsequent scanning for the initiator codon. The sequence is that of ATP-dependent RNA helicase eIF4A (tif-1) from Neurospora crassa (strain ATCC 24698 / 74-OR23-1A / CBS 708.71 / DSM 1257 / FGSC 987).